The sequence spans 881 residues: Probable alpha/beta-glucosidase agdC (881 aa).

Positions 1–14 (MLRSLLLLAPLVGA) are cleaved as a signal peptide. Residues N171, N293, and N373 are each glycosylated (N-linked (GlcNAc...) asparagine). Residue D422 is the Nucleophile of the active site. Residue E425 is part of the active site. The tract at residues 440-485 (YARDNDLPPAAPPVRPSNPRPLPGFPGDFQPSSSSKRSTKGSKVGL) is disordered. The span at 448–463 (PAAPPVRPSNPRPLPG) shows a compositional bias: pro residues. N-linked (GlcNAc...) asparagine glycosylation occurs at N506. Residue D571 is the Proton donor of the active site. N-linked (GlcNAc...) asparagine glycosylation is found at N572, N608, and N742.

The protein belongs to the glycosyl hydrolase 31 family.

Its subcellular location is the secreted. It catalyses the reaction Hydrolysis of terminal, non-reducing (1-&gt;4)-linked alpha-D-glucose residues with release of alpha-D-glucose.. The catalysed reaction is Hydrolysis of terminal, non-reducing beta-D-glucosyl residues with release of beta-D-glucose.. Glucosidase involved in the degradation of cellulosic biomass. Has both alpha- and beta-glucosidase activity. The polypeptide is Probable alpha/beta-glucosidase agdC (agdC) (Aspergillus fumigatus (strain CBS 144.89 / FGSC A1163 / CEA10) (Neosartorya fumigata)).